Here is a 146-residue protein sequence, read N- to C-terminus: MNIMPISESQLSDWLALRCLLWPDHEDVHLQEMRQLITQAHRLQLLAYTDTQQAIAMLEASIRYEYVNGTQTSPVAFLEGIFVLPEYRRSGIATGLVQQVEIWAKQFACTEFASDAALDNQISHAMHQALGFHETERVVYFKKNIG.

The 146-residue stretch at Met-1–Gly-146 folds into the N-acetyltransferase domain. The substrate site is built by Trp-22, His-25, Tyr-66, and Glu-79. Acetyl-CoA is bound at residue Ile-81–Val-83. Substrate is bound at residue Asp-115. Residue Asn-120 coordinates acetyl-CoA. Substrate is bound at residue Glu-136.

Homodimer.

The catalysed reaction is kanamycin B + acetyl-CoA = N(6')-acetylkanamycin B + CoA + H(+). Functionally, catalyzes the transfer of an acetyl group from acetyl-CoA to the 6'-amino group of aminoglycoside molecules conferring resistance to antibiotics containing the purpurosamine ring including amikacin, kanamycin, tobramycin and netilmicin. The sequence is that of Aminoglycoside N(6')-acetyltransferase type 1 from Acinetobacter baumannii.